Consider the following 395-residue polypeptide: Na(+)/H(+) antiporter NhaA (395 aa).

A run of 11 helical transmembrane segments spans residues 15–35 (FLGSPSGGACVLLLASLAGFV), 66–86 (IDAWVSDGFMTLFFLVVILEI), 101–121 (VALPLIGALGGMIVPALTYLL), 132–152 (GWAIPVATDAAFTLPIILALG), 161–181 (AWLMALAIFDDVLGIVVIAVF), 184–204 (NALYWPALAAAVVVTAALIGA), 219–239 (CILLWIALLGSGLHPTLAGVI), 265–285 (ALTPVVTWVILPLFGFMNVGV), 301–321 (LGIMSGLLIGKPVGVFSATLL), 339–359 (VFGLSLLCGIGFTISLFIANL), and 366–386 (LVIPAKMGIFAGSVLSALAGW).

The protein belongs to the NhaA Na(+)/H(+) (TC 2.A.33) antiporter family.

The protein localises to the cell inner membrane. The enzyme catalyses Na(+)(in) + 2 H(+)(out) = Na(+)(out) + 2 H(+)(in). Functionally, na(+)/H(+) antiporter that extrudes sodium in exchange for external protons. The sequence is that of Na(+)/H(+) antiporter NhaA from Gluconacetobacter diazotrophicus (strain ATCC 49037 / DSM 5601 / CCUG 37298 / CIP 103539 / LMG 7603 / PAl5).